The primary structure comprises 371 residues: Enoyl-[acyl-carrier-protein] reductase [NADH] 2, chloroplastic (371 aa).

The N-terminal 67 residues, 1–67 (MGASVTTGLQ…SLNHKRFAVR (67 aa)), are a transit peptide targeting the chloroplast. NAD(+)-binding positions include Gly-87, Tyr-94, 151 to 152 (DA), 198 to 199 (SL), and Leu-248. Residues Tyr-250 and Tyr-260 each act as proton acceptor in the active site. Residues Lys-268 and 298-302 (LGSRA) contribute to the NAD(+) site.

The protein belongs to the short-chain dehydrogenases/reductases (SDR) family. FabI subfamily. In terms of assembly, homotetramer.

The protein resides in the plastid. It is found in the chloroplast. The catalysed reaction is a 2,3-saturated acyl-[ACP] + NAD(+) = a (2E)-enoyl-[ACP] + NADH + H(+). It participates in lipid metabolism; fatty acid biosynthesis. Catalyzes the NAD-dependent reduction of a carbon-carbon double bond in an enoyl moiety that is covalently linked to an acyl carrier protein (ACP). Catalyzes the last reduction step in the de novo synthesis cycle of fatty acids. Involved in the elongation cycle of fatty acids which are used in lipid metabolism. Required for normal plant growth. The sequence is that of Enoyl-[acyl-carrier-protein] reductase [NADH] 2, chloroplastic from Oryza sativa subsp. japonica (Rice).